A 153-amino-acid polypeptide reads, in one-letter code: Small ribosomal subunit protein bS6 (153 aa).

The tract at residues 94–153 (EAHEEGPSAMMQKRDRDDRPRRDGDRPDRGPREDRGPRPPREGGFGDREDRPRRPREDRA) is disordered.

This sequence belongs to the bacterial ribosomal protein bS6 family.

Its function is as follows. Binds together with bS18 to 16S ribosomal RNA. This Agrobacterium fabrum (strain C58 / ATCC 33970) (Agrobacterium tumefaciens (strain C58)) protein is Small ribosomal subunit protein bS6.